The chain runs to 236 residues: Thrombin-like enzyme kangshuanmei (236 aa).

The Peptidase S1 domain occupies 1-227 (VIGGDECNIN…HLDWIQSIIA (227 aa)). 6 disulfide bridges follow: cysteine 7–cysteine 141, cysteine 28–cysteine 44, cysteine 78–cysteine 234, cysteine 120–cysteine 188, cysteine 152–cysteine 167, and cysteine 178–cysteine 203. Catalysis depends on histidine 43, which acts as the Charge relay system. N-linked (GlcNAc...) asparagine glycosylation is present at asparagine 81. Residue aspartate 88 is the Charge relay system of the active site. 2 N-linked (GlcNAc...) asparagine glycosylation sites follow: asparagine 99 and asparagine 148. The active-site Charge relay system is serine 182. Asparagine 229 carries N-linked (GlcNAc...) asparagine glycosylation.

The protein belongs to the peptidase S1 family. Snake venom subfamily. As to quaternary structure, monomer. Post-translationally, N-glycosylated by units composed of Fuc, Man, GlcNAc, Gal and NeuAC residues. In terms of tissue distribution, expressed by the venom gland.

It localises to the secreted. With respect to regulation, inhibited by 4-(2-aminoethyl)-benzensulfonyl fluoride. Not inhibited by antithrombin-III. Thrombin-like snake venom serine protease. Cleaves bonds after Arg and Lys, converts fibrinogen (FGA and FGB) to fibrin and releases both fibrinopeptides A and B, and fibrinogen peptide Bbeta1-42. Has a blood clotting activity. The chain is Thrombin-like enzyme kangshuanmei from Gloydius brevicauda (Korean slamosa snake).